Reading from the N-terminus, the 141-residue chain is ATP synthase epsilon chain (141 aa).

The protein belongs to the ATPase epsilon chain family. F-type ATPases have 2 components, CF(1) - the catalytic core - and CF(0) - the membrane proton channel. CF(1) has five subunits: alpha(3), beta(3), gamma(1), delta(1), epsilon(1). CF(0) has three main subunits: a, b and c.

The protein resides in the cell inner membrane. Its function is as follows. Produces ATP from ADP in the presence of a proton gradient across the membrane. In Pseudomonas fluorescens (strain ATCC BAA-477 / NRRL B-23932 / Pf-5), this protein is ATP synthase epsilon chain.